A 152-amino-acid chain; its full sequence is MKIGRQSKIVELISKHNIETQEELADLLVKAGYRVTQATISRDIRELKLTKVATDNGKQKYIVLTNQESGMSEKYIRILRDGFVSMDMAQNIIIVKTVSGMAMAVAAALDALHIEGIVGCIAGDDTIMCAIRTVPDTISVMEKLSKLINGNK.

This sequence belongs to the ArgR family.

It localises to the cytoplasm. It participates in amino-acid biosynthesis; L-arginine biosynthesis [regulation]. Regulates arginine biosynthesis genes. This chain is Arginine repressor, found in Lachnoclostridium phytofermentans (strain ATCC 700394 / DSM 18823 / ISDg) (Clostridium phytofermentans).